A 287-amino-acid polypeptide reads, in one-letter code: Iron-sulfur cluster carrier protein (287 aa).

Residue 47–54 (GKGGVGKS) participates in ATP binding.

The protein belongs to the Mrp/NBP35 ATP-binding proteins family. Homodimer.

Functionally, binds and transfers iron-sulfur (Fe-S) clusters to target apoproteins. Can hydrolyze ATP. The sequence is that of Iron-sulfur cluster carrier protein from Pseudomonas fragi.